A 156-amino-acid chain; its full sequence is Ribosomal RNA large subunit methyltransferase H (156 aa).

Residues leucine 73, glycine 104, and 123 to 128 (LSALTL) each bind S-adenosyl-L-methionine.

This sequence belongs to the RNA methyltransferase RlmH family. As to quaternary structure, homodimer.

Its subcellular location is the cytoplasm. The catalysed reaction is pseudouridine(1915) in 23S rRNA + S-adenosyl-L-methionine = N(3)-methylpseudouridine(1915) in 23S rRNA + S-adenosyl-L-homocysteine + H(+). Its function is as follows. Specifically methylates the pseudouridine at position 1915 (m3Psi1915) in 23S rRNA. This Shewanella oneidensis (strain ATCC 700550 / JCM 31522 / CIP 106686 / LMG 19005 / NCIMB 14063 / MR-1) protein is Ribosomal RNA large subunit methyltransferase H.